The primary structure comprises 460 residues: G2/mitotic-specific cyclin-4 (460 aa).

The protein belongs to the cyclin family. Cyclin AB subfamily.

Functionally, essential for the control of the cell cycle at the G2/M (mitosis) transition. Interacts with the CDC2 protein kinase to form MPF. G2/M cyclins accumulate steadily during G2 and are abruptly destroyed at mitosis. The protein is G2/mitotic-specific cyclin-4 (CLB4) of Saccharomyces cerevisiae (strain ATCC 204508 / S288c) (Baker's yeast).